The chain runs to 881 residues: Squamosa promoter-binding-like protein 1 (881 aa).

A disordered region spans residues 49–69; sequence FPLGNSSNSSSSCSDEGNDKK. The segment covering 53–62 has biased composition (low complexity); it reads NSSNSSSSCS. Residues 96 to 187 form a sufficient and necessary for DNA binding region; the sequence is PAKKTKSGAV…RKTNPEPGAN (92 aa). The SBP-type zinc finger occupies 103–180; the sequence is GAVCQVENCE…AGHNKRRRKT (78 aa). Zn(2+)-binding residues include C106, C111, C128, H131, C147, C150, H154, and C166. The short motif at 163-179 is the Bipartite nuclear localization signal element; it reads KRSCRRRLAGHNKRRRK. Residues 170 to 179 are compositionally biased toward basic residues; the sequence is LAGHNKRRRK. Disordered regions lie at residues 170–193 and 274–358; these read LAGH…PSDD and FSAR…EDAQ. Residues 275–284 show a composition bias toward polar residues; that stretch reads SARQDGTATE. Residues 285–295 show a composition bias toward basic and acidic residues; the sequence is NRSEKQVKMND. Over residues 319–338 the composition is skewed to polar residues; that stretch reads PATSSLDYPSWIHQSSPPQT. Residues 339 to 356 show a composition bias toward low complexity; it reads SRNSDSASDQSPSSSSED.

Zn(2+) is required as a cofactor.

It is found in the nucleus. Trans-acting factor that binds specifically to the consensus nucleotide sequence 5'-TNCGTACAA-3' of AP1 promoter. Binds specifically to the 5'-GTAC-3' core sequence. The polypeptide is Squamosa promoter-binding-like protein 1 (SPL1) (Arabidopsis thaliana (Mouse-ear cress)).